The sequence spans 340 residues: UDP-3-O-acylglucosamine N-acyltransferase (340 aa).

The Proton acceptor role is filled by histidine 238.

It belongs to the transferase hexapeptide repeat family. LpxD subfamily. As to quaternary structure, homotrimer.

The enzyme catalyses a UDP-3-O-[(3R)-3-hydroxyacyl]-alpha-D-glucosamine + a (3R)-hydroxyacyl-[ACP] = a UDP-2-N,3-O-bis[(3R)-3-hydroxyacyl]-alpha-D-glucosamine + holo-[ACP] + H(+). It participates in bacterial outer membrane biogenesis; LPS lipid A biosynthesis. Catalyzes the N-acylation of UDP-3-O-acylglucosamine using 3-hydroxyacyl-ACP as the acyl donor. Is involved in the biosynthesis of lipid A, a phosphorylated glycolipid that anchors the lipopolysaccharide to the outer membrane of the cell. This is UDP-3-O-acylglucosamine N-acyltransferase from Shewanella frigidimarina (strain NCIMB 400).